The sequence spans 187 residues: 1,6-anhydro-N-acetylmuramyl-L-alanine amidase AmpD (187 aa).

The region spanning 30–167 (LLVVHNISLP…APERKTDPGP (138 aa)) is the N-acetylmuramoyl-L-alanine amidase domain. Position 34 (histidine 34) interacts with Zn(2+). The active-site Proton acceptor is the glutamate 116. Positions 154 and 164 each coordinate Zn(2+).

It belongs to the N-acetylmuramoyl-L-alanine amidase 2 family. It depends on Zn(2+) as a cofactor.

It is found in the cytoplasm. It catalyses the reaction Hydrolyzes the link between N-acetylmuramoyl residues and L-amino acid residues in certain cell-wall glycopeptides.. Amidase activity is inhibited by metal chelators such as EDTA, dipicolinic acid or 1,10-phenanthroline. Its function is as follows. Involved in cell wall peptidoglycan recycling. Specifically cleaves the amide bond between the lactyl group of N-acetylmuramic acid and the alpha-amino group of the L-alanine in degradation products containing an anhydro N-acetylmuramyl moiety. Is also involved in beta-lactamase induction. This chain is 1,6-anhydro-N-acetylmuramyl-L-alanine amidase AmpD, found in Citrobacter freundii.